We begin with the raw amino-acid sequence, 323 residues long: MKDKYGREIDYLRISLTDKCNLRCAYCMEKDHNDFIHNDKLMTLDEILRVVKECASIGIKKVRLTGGEPLVREGIVDLIKNINKIPEIEEICLTTNGILLGDKVKELSENGLKRVNISLDTLKEDRFKEITRIGTLDKVLYSIEKCLENNVKVKINTVILEDFNKDEILDLINLACENPIDLRFIELMPIGEGKKFKGVTNSEILEIIKKEKKVLSDGKTLRLNGPAKYISIEGFKGKIGFISAMSDCFCEDCNRIRVTPEGFMKQCLHWKYGINLRDKMRNGISDEELREIIKKSIYEKPEKHNFKMKEKDEDKRFMYEIGG.

In terms of domain architecture, Radical SAM core spans 4-233 (KYGREIDYLR…NGPAKYISIE (230 aa)). R13 lines the GTP pocket. [4Fe-4S] cluster contacts are provided by C20 and C24. Y26 serves as a coordination point for S-adenosyl-L-methionine. C27 lines the [4Fe-4S] cluster pocket. R63 is a GTP binding site. G67 serves as a coordination point for S-adenosyl-L-methionine. T94 is a GTP binding site. S-adenosyl-L-methionine is bound at residue S118. K154 is a binding site for GTP. S-adenosyl-L-methionine is bound at residue M188. C250 and C253 together coordinate [4Fe-4S] cluster. 255–257 (RIR) is a binding site for GTP. C267 contributes to the [4Fe-4S] cluster binding site.

The protein belongs to the radical SAM superfamily. MoaA family. Monomer and homodimer. Requires [4Fe-4S] cluster as cofactor.

It carries out the reaction GTP + AH2 + S-adenosyl-L-methionine = (8S)-3',8-cyclo-7,8-dihydroguanosine 5'-triphosphate + 5'-deoxyadenosine + L-methionine + A + H(+). It participates in cofactor biosynthesis; molybdopterin biosynthesis. Its function is as follows. Catalyzes the cyclization of GTP to (8S)-3',8-cyclo-7,8-dihydroguanosine 5'-triphosphate. The chain is GTP 3',8-cyclase from Clostridium perfringens (strain 13 / Type A).